A 660-amino-acid chain; its full sequence is Probable beta-hexosaminidase fdl (660 aa).

The signal sequence occupies residues 1-36; it reads MSLAVSLRRALLVLLTGAIFILTVLYWNQGVTKAQA. 3 N-linked (GlcNAc...) asparagine glycosylation sites follow: asparagine 210, asparagine 412, and asparagine 452.

Belongs to the glycosyl hydrolase 20 family. As to expression, in third instar larval and early pupal brains, expressed in cells sending projections across the interhemispheric junction. In adult brain, expressed in mushroom body, ellipsoid body and pars intercerebralis.

It catalyses the reaction Hydrolysis of terminal non-reducing N-acetyl-D-hexosamine residues in N-acetyl-beta-D-hexosaminides.. In terms of biological role, involved in brain restructurization via hormonal control during metamorphosis. Implicated in N-glycan processing. The chain is Probable beta-hexosaminidase fdl (fdl) from Drosophila melanogaster (Fruit fly).